We begin with the raw amino-acid sequence, 251 residues long: Probable transcriptional regulatory protein Pmob_0807 (251 aa).

The segment at 1–22 (MSGHNKWANIKHRKGAQDAKRS) is disordered.

This sequence belongs to the TACO1 family.

It is found in the cytoplasm. The polypeptide is Probable transcriptional regulatory protein Pmob_0807 (Petrotoga mobilis (strain DSM 10674 / SJ95)).